The following is a 144-amino-acid chain: Large ribosomal subunit protein uL16c (144 aa).

This sequence belongs to the universal ribosomal protein uL16 family. In terms of assembly, part of the 50S ribosomal subunit.

The protein resides in the plastid. The protein localises to the chloroplast. This Chara vulgaris (Common stonewort) protein is Large ribosomal subunit protein uL16c.